The following is a 279-amino-acid chain: 4-hydroxy-3-methylbut-2-enyl diphosphate reductase (279 aa).

C12 is a [4Fe-4S] cluster binding site. The (2E)-4-hydroxy-3-methylbut-2-enyl diphosphate site is built by H40 and H72. 2 residues coordinate dimethylallyl diphosphate: H40 and H72. Isopentenyl diphosphate is bound by residues H40 and H72. C94 contributes to the [4Fe-4S] cluster binding site. H122 lines the (2E)-4-hydroxy-3-methylbut-2-enyl diphosphate pocket. H122 serves as a coordination point for dimethylallyl diphosphate. H122 contacts isopentenyl diphosphate. Catalysis depends on E124, which acts as the Proton donor. Residue T161 participates in (2E)-4-hydroxy-3-methylbut-2-enyl diphosphate binding. C189 is a [4Fe-4S] cluster binding site. 3 residues coordinate (2E)-4-hydroxy-3-methylbut-2-enyl diphosphate: S217, N219, and S261. 3 residues coordinate dimethylallyl diphosphate: S217, N219, and S261. Positions 217, 219, and 261 each coordinate isopentenyl diphosphate.

It belongs to the IspH family. [4Fe-4S] cluster serves as cofactor.

It catalyses the reaction isopentenyl diphosphate + 2 oxidized [2Fe-2S]-[ferredoxin] + H2O = (2E)-4-hydroxy-3-methylbut-2-enyl diphosphate + 2 reduced [2Fe-2S]-[ferredoxin] + 2 H(+). The catalysed reaction is dimethylallyl diphosphate + 2 oxidized [2Fe-2S]-[ferredoxin] + H2O = (2E)-4-hydroxy-3-methylbut-2-enyl diphosphate + 2 reduced [2Fe-2S]-[ferredoxin] + 2 H(+). It participates in isoprenoid biosynthesis; dimethylallyl diphosphate biosynthesis; dimethylallyl diphosphate from (2E)-4-hydroxy-3-methylbutenyl diphosphate: step 1/1. Its pathway is isoprenoid biosynthesis; isopentenyl diphosphate biosynthesis via DXP pathway; isopentenyl diphosphate from 1-deoxy-D-xylulose 5-phosphate: step 6/6. Functionally, catalyzes the conversion of 1-hydroxy-2-methyl-2-(E)-butenyl 4-diphosphate (HMBPP) into a mixture of isopentenyl diphosphate (IPP) and dimethylallyl diphosphate (DMAPP). Acts in the terminal step of the DOXP/MEP pathway for isoprenoid precursor biosynthesis. The polypeptide is 4-hydroxy-3-methylbut-2-enyl diphosphate reductase (Syntrophotalea carbinolica (strain DSM 2380 / NBRC 103641 / GraBd1) (Pelobacter carbinolicus)).